Consider the following 295-residue polypeptide: Urease accessory protein UreD (295 aa).

The protein belongs to the UreD family. UreD, UreF and UreG form a complex that acts as a GTP-hydrolysis-dependent molecular chaperone, activating the urease apoprotein by helping to assemble the nickel containing metallocenter of UreC. The UreE protein probably delivers the nickel.

The protein resides in the cytoplasm. Its function is as follows. Required for maturation of urease via the functional incorporation of the urease nickel metallocenter. The polypeptide is Urease accessory protein UreD (Saccharophagus degradans (strain 2-40 / ATCC 43961 / DSM 17024)).